Reading from the N-terminus, the 1425-residue chain is Zinc finger FYVE domain-containing protein 9 (1425 aa).

2 disordered regions span residues 201–255 (ESTE…IGRD) and 291–352 (EDLT…SGRN). Positions 202–225 (STEKDMNSEKQMDPLNRPKTEGRS) are enriched in basic and acidic residues. Polar residues-rich tracts occupy residues 230–245 (CPTSSDSLASVCSPSQ) and 296–312 (KISSPRTDLGSPNSFSH). Ser306 and Ser668 each carry phosphoserine. Residues 699-758 (DSQAPNCMKCEARFTFTKRRHHCRACGKVFCASCCSLKCKLLYMDRKEARVCVICHSVLM) form an FYVE-type zinc finger. Zn(2+) contacts are provided by Cys705, Cys708, Cys721, Cys724, Cys729, Cys732, Cys750, and Cys753. The interval 767-823 (MSASSQSPNPNNPAEYCSTIPPLQQAQASGALSSPPPTVMVPVGVLKHPGAEVAQPR) is SBD.

As to quaternary structure, interacts (via the SBD region) with SMAD2; the interaction recruits SMAD2 to the TGF-beta receptor and is disrupted by phosphorylation of SMAD2 upon TGF-beta receptor activation. Interacts with SMAD3. Interacts with TGFBR1 and TGFBR2; the interaction recruits SMAD2 to the TGF-beta receptor. Interacts with PML. Ubiquitous. In the brain found primarily in the cerebrovascular smooth muscle cells and reactive astrocytes.

The protein localises to the cytoplasm. It localises to the early endosome membrane. In terms of biological role, early endosomal protein that functions to recruit SMAD2/SMAD3 to intracellular membranes and to the TGF-beta receptor. Plays a significant role in TGF-mediated signaling by regulating the subcellular location of SMAD2 and SMAD3 and modulating the transcriptional activity of the SMAD3/SMAD4 complex. Possibly associated with TGF-beta receptor internalization. This Homo sapiens (Human) protein is Zinc finger FYVE domain-containing protein 9 (ZFYVE9).